The chain runs to 52 residues: Large ribosomal subunit protein bL32c (52 aa).

It belongs to the bacterial ribosomal protein bL32 family.

The protein localises to the plastid. Its subcellular location is the chloroplast. This chain is Large ribosomal subunit protein bL32c, found in Morus indica (Mulberry).